The primary structure comprises 394 residues: Aspergillopepsin-1 (394 aa).

The signal sequence occupies residues 1 to 20 (MVVFSKTAALVLGLSTAVSA). Residues 21–69 (APAPTRKGFTINQIARPANKTRTVNLPGLYARSLAKFGGTVPQSVKEAA) constitute a propeptide, activation peptide. Positions 85-391 (YLTPVTVGKS…NSEGPKLGFA (307 aa)) constitute a Peptidase A1 domain. Active-site residues include D101 and D283. An intrachain disulfide couples C319 to C354.

Belongs to the peptidase A1 family.

It localises to the secreted. The catalysed reaction is Hydrolysis of proteins with broad specificity. Generally favors hydrophobic residues in P1 and P1', but also accepts Lys in P1, which leads to activation of trypsinogen. Does not clot milk.. Its function is as follows. Secreted aspartic endopeptidase that allows assimilation of proteinaceous substrates. The scissile peptide bond is attacked by a nucleophilic water molecule activated by two aspartic residues in the active site. Shows a broad primary substrate specificity. Favors hydrophobic residues at the P1 and P1' positions, but also accepts a lysine residue in the P1 position, leading to the activation of trypsinogen and chymotrypsinogen A. This chain is Aspergillopepsin-1, found in Aspergillus niger.